The primary structure comprises 29 residues: Omega-conotoxin MVIIC (29 aa).

Residues threonine 1–arginine 2 constitute a propeptide that is removed on maturation. 3 disulfide bridges follow: cysteine 3-cysteine 18, cysteine 10-cysteine 22, and cysteine 17-cysteine 28. Cysteine 28 carries the post-translational modification Cysteine amide.

The protein belongs to the conotoxin O1 superfamily. Post-translationally, not hydroxylated; hydroxylation, on a synthetic hydroxylated MVIIC, has a significant impact on the oxidative folding but not on the biological activity. As to expression, expressed by the venom duct.

The protein localises to the secreted. In terms of biological role, omega-conotoxins act at presynaptic membranes, they bind and block voltage-gated calcium channels (Cav). This toxin preferentially blocks P/Q-type calcium channels (Cav2.1/CACNA1A) (IC(50)=0.60 nM). Also shows an inhibition on Cav2.2/CACNA1A channels (IC(50)=7.0 nM). This chain is Omega-conotoxin MVIIC, found in Conus magus (Magical cone).